Here is a 173-residue protein sequence, read N- to C-terminus: Small ribosomal subunit protein uS5 (173 aa).

One can recognise an S5 DRBM domain in the interval 17–80 (LREKMIAVNR…EESRRNMIKV (64 aa)).

It belongs to the universal ribosomal protein uS5 family. As to quaternary structure, part of the 30S ribosomal subunit. Contacts proteins S4 and S8.

In terms of biological role, with S4 and S12 plays an important role in translational accuracy. Functionally, located at the back of the 30S subunit body where it stabilizes the conformation of the head with respect to the body. The protein is Small ribosomal subunit protein uS5 of Delftia acidovorans (strain DSM 14801 / SPH-1).